A 223-amino-acid chain; its full sequence is Ribose-5-phosphate isomerase A (223 aa).

Residues 29–32 (TGST), 82–85 (DGAD), and 95–98 (KGGG) contribute to the substrate site. Glu104 serves as the catalytic Proton acceptor. Lys122 provides a ligand contact to substrate.

It belongs to the ribose 5-phosphate isomerase family. As to quaternary structure, homodimer.

It carries out the reaction aldehydo-D-ribose 5-phosphate = D-ribulose 5-phosphate. It functions in the pathway carbohydrate degradation; pentose phosphate pathway; D-ribose 5-phosphate from D-ribulose 5-phosphate (non-oxidative stage): step 1/1. Functionally, catalyzes the reversible conversion of ribose-5-phosphate to ribulose 5-phosphate. The sequence is that of Ribose-5-phosphate isomerase A from Neisseria gonorrhoeae (strain ATCC 700825 / FA 1090).